The following is a 756-amino-acid chain: Ent-kaurene synthase, chloroplastic (756 aa).

Residues Asp-507 and Asp-511 each coordinate Mg(2+). Residues 507-511 carry the DDXXD motif motif; it reads DDFFD. Residues 606-622 form a helical membrane-spanning segment; it reads YVSFALGPIVLPCLYLV. Asn-651, Thr-655, and Glu-659 together coordinate Mg(2+).

Belongs to the terpene synthase family. The cofactor is Mg(2+). As to expression, present in both leaves and flowers.

The protein resides in the plastid. It localises to the chloroplast membrane. The enzyme catalyses ent-copalyl diphosphate = ent-kaur-16-ene + diphosphate. It participates in plant hormone biosynthesis; gibberellin biosynthesis. In terms of biological role, involved in the biosynthesis of labdane-type diterpenoid including marrubiin and other labdane-related furanoid diterpenoids with potential applications as anti-diabetics, analgesics or vasorelaxants. Terpene synthase that produces ent-kaurene from ent-copalyl diphosphate (ent-CPP). The protein is Ent-kaurene synthase, chloroplastic of Marrubium vulgare (White horehound).